The following is a 210-amino-acid chain: NAD(P)H-hydrate epimerase (210 aa).

The YjeF N-terminal domain maps to 11 to 210; that stretch reads AHNFDDYTIN…TVADIGIYEP (200 aa). 60 to 64 provides a ligand contact to (6S)-NADPHX; sequence NNGGD. K(+) contacts are provided by Asn-61 and Asp-123. (6S)-NADPHX contacts are provided by residues 127 to 133 and Asp-156; that span reads GVGLSRD. Thr-159 is a binding site for K(+).

Belongs to the NnrE/AIBP family. K(+) serves as cofactor.

It catalyses the reaction (6R)-NADHX = (6S)-NADHX. The enzyme catalyses (6R)-NADPHX = (6S)-NADPHX. Catalyzes the epimerization of the S- and R-forms of NAD(P)HX, a damaged form of NAD(P)H that is a result of enzymatic or heat-dependent hydration. This is a prerequisite for the S-specific NAD(P)H-hydrate dehydratase to allow the repair of both epimers of NAD(P)HX. In Oenococcus oeni (strain ATCC BAA-331 / PSU-1), this protein is NAD(P)H-hydrate epimerase.